The primary structure comprises 2662 residues: Centrosome-associated protein CEP250L1 (2662 aa).

Coiled-coil stretches lie at residues 1030–1248 (KVHY…EEEE) and 1281–1719 (ARTH…IDAQ).

The protein localises to the cytoplasm. It localises to the cytoskeleton. Its subcellular location is the microtubule organizing center. The protein resides in the centrosome. In terms of biological role, part of the centrosome inner core complex. Plays a role in the formation and/or stabilization of the mitotic spindle. Required for proper nuclear segregation and DNA partitioning during cell division. This is Centrosome-associated protein CEP250L1 from Toxoplasma gondii (strain ATCC 50611 / Me49).